We begin with the raw amino-acid sequence, 317 residues long: Ribosomal protein L11 methyltransferase (317 aa).

S-adenosyl-L-methionine-binding residues include T158, G179, D201, and N244.

Belongs to the methyltransferase superfamily. PrmA family.

It is found in the cytoplasm. It carries out the reaction L-lysyl-[protein] + 3 S-adenosyl-L-methionine = N(6),N(6),N(6)-trimethyl-L-lysyl-[protein] + 3 S-adenosyl-L-homocysteine + 3 H(+). Its function is as follows. Methylates ribosomal protein L11. This is Ribosomal protein L11 methyltransferase from Streptococcus pyogenes serotype M4 (strain MGAS10750).